Consider the following 460-residue polypeptide: ATP synthase subunit beta (460 aa).

Residue 150–157 participates in ATP binding; the sequence is GGAGVGKT.

This sequence belongs to the ATPase alpha/beta chains family. In terms of assembly, F-type ATPases have 2 components, CF(1) - the catalytic core - and CF(0) - the membrane proton channel. CF(1) has five subunits: alpha(3), beta(3), gamma(1), delta(1), epsilon(1). CF(0) has three main subunits: a(1), b(2) and c(9-12). The alpha and beta chains form an alternating ring which encloses part of the gamma chain. CF(1) is attached to CF(0) by a central stalk formed by the gamma and epsilon chains, while a peripheral stalk is formed by the delta and b chains.

Its subcellular location is the cell inner membrane. The catalysed reaction is ATP + H2O + 4 H(+)(in) = ADP + phosphate + 5 H(+)(out). Its function is as follows. Produces ATP from ADP in the presence of a proton gradient across the membrane. The catalytic sites are hosted primarily by the beta subunits. This is ATP synthase subunit beta from Yersinia pestis bv. Antiqua (strain Angola).